The following is a 609-amino-acid chain: Glutamine--fructose-6-phosphate aminotransferase [isomerizing] (609 aa).

Residue cysteine 2 is the Nucleophile; for GATase activity of the active site. A Glutamine amidotransferase type-2 domain is found at 2–217 (CGIVGYIGRR…EGWLAELTPE (216 aa)). 2 consecutive SIS domains span residues 286-425 (SAAE…QNGR) and 458-599 (AAEA…VDKP). Lysine 604 serves as the catalytic For Fru-6P isomerization activity.

In terms of assembly, homodimer.

It is found in the cytoplasm. The catalysed reaction is D-fructose 6-phosphate + L-glutamine = D-glucosamine 6-phosphate + L-glutamate. Functionally, catalyzes the first step in hexosamine metabolism, converting fructose-6P into glucosamine-6P using glutamine as a nitrogen source. The protein is Glutamine--fructose-6-phosphate aminotransferase [isomerizing] of Symbiobacterium thermophilum (strain DSM 24528 / JCM 14929 / IAM 14863 / T).